Consider the following 449-residue polypeptide: UDP-N-acetylmuramoylalanine--D-glutamate ligase (449 aa).

Gly118–Thr124 contributes to the ATP binding site.

The protein belongs to the MurCDEF family.

Its subcellular location is the cytoplasm. The enzyme catalyses UDP-N-acetyl-alpha-D-muramoyl-L-alanine + D-glutamate + ATP = UDP-N-acetyl-alpha-D-muramoyl-L-alanyl-D-glutamate + ADP + phosphate + H(+). Its pathway is cell wall biogenesis; peptidoglycan biosynthesis. Functionally, cell wall formation. Catalyzes the addition of glutamate to the nucleotide precursor UDP-N-acetylmuramoyl-L-alanine (UMA). This Staphylococcus carnosus (strain TM300) protein is UDP-N-acetylmuramoylalanine--D-glutamate ligase.